A 76-amino-acid polypeptide reads, in one-letter code: Conopeptide X11.1 (76 aa).

Residues M1–G20 form the signal peptide. The propeptide occupies E21–R39. 4 cysteine pairs are disulfide-bonded: C42/C56, C49/C61, C55/C66, and C60/C73.

Expressed by the venom duct.

It localises to the secreted. Antimicrobial peptide that potently inhibits growth of Mycobacterium tuberculosis (H37Rv strain) (MIC=3 uM). This chain is Conopeptide X11.1, found in Conasprella ximenes (Interrupted cone).